A 260-amino-acid chain; its full sequence is tRNA pseudouridine synthase A (260 aa).

The Nucleophile role is filled by Asp52. Tyr111 contacts substrate.

The protein belongs to the tRNA pseudouridine synthase TruA family. As to quaternary structure, homodimer.

The catalysed reaction is uridine(38/39/40) in tRNA = pseudouridine(38/39/40) in tRNA. Formation of pseudouridine at positions 38, 39 and 40 in the anticodon stem and loop of transfer RNAs. The protein is tRNA pseudouridine synthase A of Roseobacter denitrificans (strain ATCC 33942 / OCh 114) (Erythrobacter sp. (strain OCh 114)).